A 32-amino-acid polypeptide reads, in one-letter code: Photosystem II reaction center protein T (32 aa).

The chain crosses the membrane as a helical span at residues 3 to 23 (ALVYTFLLIGTLMVIFFAVFF).

The protein belongs to the PsbT family. PSII is composed of 1 copy each of membrane proteins PsbA, PsbB, PsbC, PsbD, PsbE, PsbF, PsbH, PsbI, PsbJ, PsbK, PsbL, PsbM, PsbT, PsbX, PsbY, PsbZ, Psb30/Ycf12, at least 3 peripheral proteins of the oxygen-evolving complex and a large number of cofactors. It forms dimeric complexes.

It is found in the plastid. The protein localises to the chloroplast thylakoid membrane. Found at the monomer-monomer interface of the photosystem II (PS II) dimer, plays a role in assembly and dimerization of PSII. PSII is a light-driven water plastoquinone oxidoreductase, using light energy to abstract electrons from H(2)O, generating a proton gradient subsequently used for ATP formation. In Trieres chinensis (Marine centric diatom), this protein is Photosystem II reaction center protein T.